The chain runs to 118 residues: V-type proton ATPase subunit G 2 (118 aa).

The disordered stretch occupies residues 23–91; it reads ADARKRKARR…QGMQSSQQRN (69 aa). A compositionally biased stretch (basic and acidic residues) spans 35–55; that stretch reads QAKEEAQMEVEQYRREREQEF. Composition is skewed to polar residues over residues 56 to 69 and 78 to 89; these read QSKQQAAMGSQGNL and RRQVQGMQSSQQ.

Belongs to the V-ATPase G subunit family. As to quaternary structure, V-ATPase is a heteromultimeric enzyme made up of two complexes: the ATP-hydrolytic V1 complex and the proton translocation V0 complex. The V1 complex consists of three catalytic AB heterodimers that form a heterohexamer, three peripheral stalks each consisting of EG heterodimers, one central rotor including subunits D and F, and the regulatory subunits C and H. The proton translocation complex V0 consists of the proton transport subunit a, a ring of proteolipid subunits c9c'', rotary subunit d, subunits e and f, and the accessory subunits ATP6AP1/Ac45 and ATP6AP2/PRR.

It is found in the melanosome. Its subcellular location is the cytoplasmic vesicle. It localises to the clathrin-coated vesicle membrane. Functionally, subunit of the V1 complex of vacuolar(H+)-ATPase (V-ATPase), a multisubunit enzyme composed of a peripheral complex (V1) that hydrolyzes ATP and a membrane integral complex (V0) that translocates protons. V-ATPase is responsible for acidifying and maintaining the pH of intracellular compartments and in some cell types, is targeted to the plasma membrane, where it is responsible for acidifying the extracellular environment. The polypeptide is V-type proton ATPase subunit G 2 (Atp6v1g2) (Mus musculus (Mouse)).